The sequence spans 292 residues: Nitrogenase iron protein (292 aa).

10–17 (GKGGIGKS) is an ATP binding site. Position 98 (Cys98) interacts with [4Fe-4S] cluster. ADP-ribosylarginine; by dinitrogenase reductase ADP-ribosyltransferase is present on Arg101. Cys133 serves as a coordination point for [4Fe-4S] cluster.

It belongs to the NifH/BchL/ChlL family. In terms of assembly, homodimer. It depends on [4Fe-4S] cluster as a cofactor. In terms of processing, the reversible ADP-ribosylation of Arg-101 inactivates the nitrogenase reductase and regulates nitrogenase activity.

The enzyme catalyses N2 + 8 reduced [2Fe-2S]-[ferredoxin] + 16 ATP + 16 H2O = H2 + 8 oxidized [2Fe-2S]-[ferredoxin] + 2 NH4(+) + 16 ADP + 16 phosphate + 6 H(+). Its function is as follows. The key enzymatic reactions in nitrogen fixation are catalyzed by the nitrogenase complex, which has 2 components: the iron protein and the molybdenum-iron protein. The protein is Nitrogenase iron protein of Teredinibacter turnerae (strain ATCC 39867 / T7901).